The primary structure comprises 208 residues: Probable nicotinate-nucleotide adenylyltransferase (208 aa).

The protein belongs to the NadD family.

It catalyses the reaction nicotinate beta-D-ribonucleotide + ATP + H(+) = deamido-NAD(+) + diphosphate. It functions in the pathway cofactor biosynthesis; NAD(+) biosynthesis; deamido-NAD(+) from nicotinate D-ribonucleotide: step 1/1. Catalyzes the reversible adenylation of nicotinate mononucleotide (NaMN) to nicotinic acid adenine dinucleotide (NaAD). The chain is Probable nicotinate-nucleotide adenylyltransferase from Nostoc sp. (strain PCC 7120 / SAG 25.82 / UTEX 2576).